A 336-amino-acid polypeptide reads, in one-letter code: Biotin synthase (336 aa).

The Radical SAM core domain maps to 36–263; that stretch reads TKVQISTLLS…ESHVRLAAGR (228 aa). [4Fe-4S] cluster contacts are provided by cysteine 51, cysteine 55, and cysteine 58. 4 residues coordinate [2Fe-2S] cluster: cysteine 95, cysteine 126, cysteine 186, and arginine 258.

The protein belongs to the radical SAM superfamily. Biotin synthase family. In terms of assembly, homodimer. [4Fe-4S] cluster is required as a cofactor. [2Fe-2S] cluster serves as cofactor.

The catalysed reaction is (4R,5S)-dethiobiotin + (sulfur carrier)-SH + 2 reduced [2Fe-2S]-[ferredoxin] + 2 S-adenosyl-L-methionine = (sulfur carrier)-H + biotin + 2 5'-deoxyadenosine + 2 L-methionine + 2 oxidized [2Fe-2S]-[ferredoxin]. It functions in the pathway cofactor biosynthesis; biotin biosynthesis; biotin from 7,8-diaminononanoate: step 2/2. In terms of biological role, catalyzes the conversion of dethiobiotin (DTB) to biotin by the insertion of a sulfur atom into dethiobiotin via a radical-based mechanism. The sequence is that of Biotin synthase from Gluconobacter oxydans (strain 621H) (Gluconobacter suboxydans).